The sequence spans 293 residues: 4-hydroxy-tetrahydrodipicolinate synthase (293 aa).

Residue T46 coordinates pyruvate. Residue Y133 is the Proton donor/acceptor of the active site. Residue K161 is the Schiff-base intermediate with substrate of the active site. Pyruvate is bound at residue V202.

The protein belongs to the DapA family. As to quaternary structure, homotetramer; dimer of dimers.

The protein localises to the cytoplasm. The enzyme catalyses L-aspartate 4-semialdehyde + pyruvate = (2S,4S)-4-hydroxy-2,3,4,5-tetrahydrodipicolinate + H2O + H(+). It functions in the pathway amino-acid biosynthesis; L-lysine biosynthesis via DAP pathway; (S)-tetrahydrodipicolinate from L-aspartate: step 3/4. Catalyzes the condensation of (S)-aspartate-beta-semialdehyde [(S)-ASA] and pyruvate to 4-hydroxy-tetrahydrodipicolinate (HTPA). The chain is 4-hydroxy-tetrahydrodipicolinate synthase from Wolbachia pipientis subsp. Culex pipiens (strain wPip).